Here is a 604-residue protein sequence, read N- to C-terminus: Complement factor I (604 aa).

Positions 1–18 (MKLALLILLLLNPHLSSS) are cleaved as a signal peptide. 20 disulfide bridges follow: Cys-36-Cys-260, Cys-46-Cys-57, Cys-51-Cys-62, Cys-64-Cys-96, Cys-70-Cys-89, Cys-78-Cys-109, Cys-144-Cys-186, Cys-157-Cys-219, Cys-191-Cys-201, Cys-234-Cys-252, Cys-246-Cys-261, Cys-264-Cys-276, Cys-271-Cys-289, Cys-283-Cys-298, Cys-349-Cys-474, Cys-387-Cys-403, Cys-395-Cys-465, Cys-488-Cys-552, Cys-516-Cys-531, and Cys-542-Cys-571. Asn-40 carries an N-linked (GlcNAc...) asparagine glycan. One can recognise a Kazal-like domain in the interval 58 to 111 (IEGTCACKLPYQCPKAGTPVCATNGRGYPTYCHLKSFECLHPEIKFSNNGTCTA). N-linked (GlcNAc...) asparagine glycans are attached at residues Asn-106, Asn-116, and Asn-182. An SRCR domain is found at 117-217 (VSLIYGSTDT…SKAPHGLAGV (101 aa)). LDL-receptor class A domains are found at residues 218-262 (VCYT…LCCK) and 263-299 (GCRG…SGCE). Ca(2+) is bound by residues Lys-244, Asp-247, Val-249, Asp-251, Asp-257, and Glu-258. Residues Asn-284, Glu-286, Asp-288, Asp-294, and Glu-295 each coordinate Ca(2+). The region spanning 362–595 (VVGGKPAEMG…YFDWISYYVG (234 aa)) is the Peptidase S1 domain. Residues His-402 and Asp-450 each act as charge relay system in the active site. The N-linked (GlcNAc...) asparagine glycan is linked to Asn-515. Residue Ser-546 is the Charge relay system of the active site. Asn-557 carries an N-linked (GlcNAc...) asparagine glycan.

It belongs to the peptidase S1 family. As to quaternary structure, heterodimer of a light and heavy chains; disulfide-linked. The fully processed and mature protein circulates as a zymogen, and is allosterically activated by substrate-induced remodeling of the active site. Interacts with C3b. Interacts with complement factor H. Expressed in the liver by hepatocytes. Also present in other cells such as monocytes, fibroblasts or keratinocytes.

It is found in the secreted. The protein resides in the extracellular space. It catalyses the reaction Inactivates complement subcomponents C3b, iC3b and C4b by proteolytic cleavage.. In terms of biological role, trypsin-like serine protease that plays an essential role in regulating the immune response by controlling all complement pathways. Inhibits these pathways by cleaving three peptide bonds in the alpha-chain of C3b and two bonds in the alpha-chain of C4b thereby inactivating these proteins. Essential cofactors for these reactions include factor H and C4BP in the fluid phase and membrane cofactor protein/CD46 and CR1 on cell surfaces. The presence of these cofactors on healthy cells allows degradation of deposited C3b by CFI in order to prevent undesired complement activation, while in apoptotic cells or microbes, the absence of such cofactors leads to C3b-mediated complement activation and subsequent opsonization. The sequence is that of Complement factor I (Cfi) from Rattus norvegicus (Rat).